We begin with the raw amino-acid sequence, 631 residues long: Phosphomethylpyrimidine synthase (631 aa).

Substrate is bound by residues N239, M268, Y297, H333, 353–355 (SRG), 394–397 (DGLR), and E433. Position 437 (H437) interacts with Zn(2+). A substrate-binding site is contributed by Y460. H501 provides a ligand contact to Zn(2+). Residues C581, C584, and C589 each coordinate [4Fe-4S] cluster.

Belongs to the ThiC family. As to quaternary structure, homodimer. [4Fe-4S] cluster is required as a cofactor.

The catalysed reaction is 5-amino-1-(5-phospho-beta-D-ribosyl)imidazole + S-adenosyl-L-methionine = 4-amino-2-methyl-5-(phosphooxymethyl)pyrimidine + CO + 5'-deoxyadenosine + formate + L-methionine + 3 H(+). The protein operates within cofactor biosynthesis; thiamine diphosphate biosynthesis. Functionally, catalyzes the synthesis of the hydroxymethylpyrimidine phosphate (HMP-P) moiety of thiamine from aminoimidazole ribotide (AIR) in a radical S-adenosyl-L-methionine (SAM)-dependent reaction. This is Phosphomethylpyrimidine synthase from Escherichia coli O127:H6 (strain E2348/69 / EPEC).